The chain runs to 106 residues: Integration host factor subunit alpha (106 aa).

It belongs to the bacterial histone-like protein family. As to quaternary structure, heterodimer of an alpha and a beta chain.

In terms of biological role, this protein is one of the two subunits of integration host factor, a specific DNA-binding protein that functions in genetic recombination as well as in transcriptional and translational control. In Paramagnetospirillum magneticum (strain ATCC 700264 / AMB-1) (Magnetospirillum magneticum), this protein is Integration host factor subunit alpha.